A 182-amino-acid polypeptide reads, in one-letter code: MKNNSVKIVVATGIGAALFVIIGWLINIPTPIPNTSIQLQYAVLALFSALFGPLAGFLIGFIGHALKDSFLYGAPWWTWVLGSGLMGLFLGFGVKRESLTQGIFGNKEIIRFNIVQFLANVVVWGLIAPIGDILVYSEPANKVFTQGVVAGLVNALTIAVAGTLLLKLYAATRTKSGTLDKE.

5 helical membrane-spanning segments follow: residues 8–28 (IVVATGIGAALFVIIGWLINI), 42–62 (AVLALFSALFGPLAGFLIGFI), 74–94 (APWWTWVLGSGLMGLFLGFGV), 114–134 (IVQFLANVVVWGLIAPIGDIL), and 146–166 (QGVVAGLVNALTIAVAGTLLL).

It belongs to the UPF0397 family.

It is found in the cell membrane. The sequence is that of UPF0397 protein llmg_0343 from Lactococcus lactis subsp. cremoris (strain MG1363).